Reading from the N-terminus, the 275-residue chain is MTEISITTSVPDAGAPPSVVGGQVERAKVSVRDLNFYYGDNHALKAINLNLIANRVTAFIGPSGCGKSTLLRVFNRMYDLYPGQRATGQVMLDSQNVLDAKLDLNLLRARVGMVFQKPTPFPMTIYENIAFGVRLYEKISKSEMDNRVERALRGGALWNEVKDQLGASGLSLSGGQQQRLCIARTIAVRPEVILFDEPCSALDPISTAKIEELIDELKEDYTIAIVTHNMQQAARVSDSTAFMYLGELIEFGETNKIFTSPTDRRTQDYITGRFG.

An ABC transporter domain is found at 29-270 (VSVRDLNFYY…PTDRRTQDYI (242 aa)). An ATP-binding site is contributed by 61–68 (GPSGCGKS).

It belongs to the ABC transporter superfamily. Phosphate importer (TC 3.A.1.7) family. In terms of assembly, the complex is composed of two ATP-binding proteins (PstB), two transmembrane proteins (PstC and PstA) and a solute-binding protein (PstS).

It localises to the cell inner membrane. The catalysed reaction is phosphate(out) + ATP + H2O = ADP + 2 phosphate(in) + H(+). Its function is as follows. Part of the ABC transporter complex PstSACB involved in phosphate import. Responsible for energy coupling to the transport system. This is Phosphate import ATP-binding protein PstB from Rhodopseudomonas palustris (strain BisB18).